Consider the following 439-residue polypeptide: tRNA(Ile)-lysidine synthase (439 aa).

23–28 (SGGLDS) contributes to the ATP binding site.

Belongs to the tRNA(Ile)-lysidine synthase family.

It is found in the cytoplasm. It catalyses the reaction cytidine(34) in tRNA(Ile2) + L-lysine + ATP = lysidine(34) in tRNA(Ile2) + AMP + diphosphate + H(+). Ligates lysine onto the cytidine present at position 34 of the AUA codon-specific tRNA(Ile) that contains the anticodon CAU, in an ATP-dependent manner. Cytidine is converted to lysidine, thus changing the amino acid specificity of the tRNA from methionine to isoleucine. In Methylococcus capsulatus (strain ATCC 33009 / NCIMB 11132 / Bath), this protein is tRNA(Ile)-lysidine synthase.